Consider the following 180-residue polypeptide: Inorganic pyrophosphatase (180 aa).

Substrate-binding residues include lysine 28, arginine 42, and tyrosine 54. The Mg(2+) site is built by aspartate 66, aspartate 71, and aspartate 102. Tyrosine 139 is a binding site for substrate.

The protein belongs to the PPase family. In terms of assembly, homohexamer. Requires Mg(2+) as cofactor.

The protein resides in the cytoplasm. The enzyme catalyses diphosphate + H2O = 2 phosphate + H(+). Functionally, hydrolyzes PPi generated in anabolic reactions. Catalyzes the hydrolysis of inorganic pyrophosphate (PPi) forming two phosphate ions. This Pseudanabaena sp. (strain PCC 6903) protein is Inorganic pyrophosphatase.